Here is a 27-residue protein sequence, read N- to C-terminus: Conotoxin (27 aa).

Disulfide bonds link cysteine 2–cysteine 16, cysteine 6–cysteine 18, and cysteine 12–cysteine 23. Asparagine 27 carries the post-translational modification Asparagine amide.

Expressed by the venom duct.

It localises to the secreted. In terms of biological role, probable neurotoxin that inhibits ion channels. This is Conotoxin from Conus amadis (Amadis cone).